The primary structure comprises 300 residues: Uricase (300 aa).

Ala2 carries the post-translational modification N-acetylalanine. An N6-acetyllysine; alternate mark is found at Lys6 and Lys19. N6-succinyllysine; alternate is present on residues Lys6 and Lys19. The Charge relay system role is filled by Lys19. N6-acetyllysine occurs at positions 23 and 32. A phosphoserine mark is found at Ser35 and Ser59. Thr64 acts as the Charge relay system in catalysis. Urate-binding residues include Thr64 and Asp65. An N6-acetyllysine mark is found at Lys114, Lys118, and Lys160. Phe166 provides a ligand contact to urate. An N6-acetyllysine mark is found at Lys171 and Lys181. Urate is bound at residue Arg183. An N6-acetyllysine; alternate mark is found at Lys217 and Lys224. An N6-succinyllysine; alternate mark is found at Lys217 and Lys224. Phosphoserine is present on Ser228. Positions 231, 232, and 258 each coordinate urate. The Charge relay system role is filled by His260. Lys274 carries the post-translational modification N6-acetyllysine. A Phosphotyrosine modification is found at Tyr285. A Microbody targeting signal motif is present at residues 298-300 (SRL).

The protein belongs to the uricase family.

The protein resides in the peroxisome. It carries out the reaction urate + O2 + H2O = 5-hydroxyisourate + H2O2. It functions in the pathway purine metabolism; urate degradation; (S)-allantoin from urate: step 1/3. Catalyzes the oxidation of uric acid to 5-hydroxyisourate, which is further processed to form (S)-allantoin. In Oryctolagus cuniculus (Rabbit), this protein is Uricase (UOX).